We begin with the raw amino-acid sequence, 204 residues long: Nucleoside triphosphate pyrophosphatase (204 aa).

The active-site Proton acceptor is aspartate 78.

The protein belongs to the Maf family. The cofactor is a divalent metal cation.

It is found in the cytoplasm. It catalyses the reaction a ribonucleoside 5'-triphosphate + H2O = a ribonucleoside 5'-phosphate + diphosphate + H(+). The catalysed reaction is a 2'-deoxyribonucleoside 5'-triphosphate + H2O = a 2'-deoxyribonucleoside 5'-phosphate + diphosphate + H(+). In terms of biological role, nucleoside triphosphate pyrophosphatase. May have a dual role in cell division arrest and in preventing the incorporation of modified nucleotides into cellular nucleic acids. In Prochlorococcus marinus (strain MIT 9215), this protein is Nucleoside triphosphate pyrophosphatase.